Reading from the N-terminus, the 248-residue chain is 3-deoxy-manno-octulosonate cytidylyltransferase (248 aa).

It belongs to the KdsB family.

It localises to the cytoplasm. It carries out the reaction 3-deoxy-alpha-D-manno-oct-2-ulosonate + CTP = CMP-3-deoxy-beta-D-manno-octulosonate + diphosphate. The protein operates within nucleotide-sugar biosynthesis; CMP-3-deoxy-D-manno-octulosonate biosynthesis; CMP-3-deoxy-D-manno-octulosonate from 3-deoxy-D-manno-octulosonate and CTP: step 1/1. It functions in the pathway bacterial outer membrane biogenesis; lipopolysaccharide biosynthesis. Its function is as follows. Activates KDO (a required 8-carbon sugar) for incorporation into bacterial lipopolysaccharide in Gram-negative bacteria. The chain is 3-deoxy-manno-octulosonate cytidylyltransferase from Erwinia tasmaniensis (strain DSM 17950 / CFBP 7177 / CIP 109463 / NCPPB 4357 / Et1/99).